The chain runs to 117 residues: NADH-ubiquinone oxidoreductase chain 3 (117 aa).

3 helical membrane passes run 4–24 (FLGILIYFFIALALSLLLLGL), 61–81 (LVAILFIIFDLEVAFLFPWAL), and 86–106 (IGYFGFWSMMLFLFILTVGFI).

This sequence belongs to the complex I subunit 3 family.

Its subcellular location is the mitochondrion membrane. The catalysed reaction is a ubiquinone + NADH + 5 H(+)(in) = a ubiquinol + NAD(+) + 4 H(+)(out). Core subunit of the mitochondrial membrane respiratory chain NADH dehydrogenase (Complex I) that is believed to belong to the minimal assembly required for catalysis. Complex I functions in the transfer of electrons from NADH to the respiratory chain. The immediate electron acceptor for the enzyme is believed to be ubiquinone. This is NADH-ubiquinone oxidoreductase chain 3 (NAD3) from Prototheca wickerhamii.